A 4650-amino-acid chain; its full sequence is Nonribosomal peptide synthetase lenA (4650 aa).

An adenylation 1 region spans residues 227–628; it reads GSILDTIRAK…DGSVIHVGRK (402 aa). The Carrier 1 domain maps to 773 to 849; sequence PPETVLEKAL…KLAQYLRNTE (77 aa). Serine 810 carries the post-translational modification O-(pantetheine 4'-phosphoryl)serine. The tract at residues 890–1212 is condensation 1; the sequence is EDCYPCTALQ…CDFQSQLIFQ (323 aa). Residues 1288–1622 form an adenylation 2 region; sequence ELELNAQKEP…RKIRPGYLGR (335 aa). The Carrier 2 domain occupies 1745–1822; it reads PPVSAAEKKW…EIAALSETRD (78 aa). Serine 1782 carries the O-(pantetheine 4'-phosphoryl)serine modification. The condensation 2 stretch occupies residues 1850-2110; sequence ATNLIAATVH…GEKTRPGGGA (261 aa). The interval 2183–2511 is adenylation 3; it reads RCVHDLVHDA…RTGDLIKLRG (329 aa). One can recognise a Carrier 3 domain in the interval 2630 to 2708; that stretch reads APQNRLQHDI…EADVGLDHAS (79 aa). Serine 2667 carries the O-(pantetheine 4'-phosphoryl)serine modification. The epimerase stretch occupies residues 2722 to 2998; that stretch reads ESMARALAVI…KDARRRSPAN (277 aa). The tract at residues 3128 to 3565 is condensation 3; that stretch reads VQDVYPCTPI…VDDSQRQQIL (438 aa). An adenylation 4 region spans residues 3578–3980; it reads CVHHIIHQRC…FVGRKDNQIK (403 aa). A Carrier 4 domain is found at 4114-4190; that stretch reads TPSTPLEAQL…QLAAVLEEGA (77 aa). Serine 4151 is modified (O-(pantetheine 4'-phosphoryl)serine). Residues 4249–4648 form a condensation 4 region; the sequence is HMVLTFSQPV…TTTPEKLVAE (400 aa).

It belongs to the NRP synthetase family. Requires pantetheine 4'-phosphate as cofactor.

It participates in alkaloid biosynthesis. Functionally, nonribosomal peptide synthetase; part of the gene cluster that mediates the biosynthesis of the ergot alkaloids lentopeptins A and B. Within the pathway, lenA catalyzes the biosynthesis of the Ala-Val-Ala peptide chain, including a cinnamic acid moiety as the starting unit. The release of the peptide from the enzyme is accomplished via a cyclization reaction catalyzed by the terminal condensation-like (Ct) domain of lenA to form the N-acyldiketopiperazine intermediate. The reaction appears to proceed through a nucleophilic attack on the carbonyl carbon by a lone electron pair of the valine amide nitrogen. The phenylalanine ammonia-lyase lenB provides the starter unit for the synthesis of the N-acyldiketopiperazine intermediate by the NRPS lenA, while the cytochrome P450 monooxygenase lenC is involved in the post-NRPS oxidative modification steps to form lentopeptins A and B. The chain is Nonribosomal peptide synthetase lenA from Aspergillus lentulus.